The primary structure comprises 513 residues: Probable E3 ubiquitin-protein ligase XBOS34 (513 aa).

ANK repeat units follow at residues 39-69 (EGKT…NVNA), 75-104 (YCGT…NPFI), and 108-137 (DCHT…LFCG). Composition is skewed to polar residues over residues 309–327 (ITTT…NSLN) and 335–355 (SAPS…STYN). Disordered regions lie at residues 309-378 (ITTT…QNST) and 423-455 (SADG…SNSG). Residues 361–378 (GTSSGQSSSKHNKSQNST) are compositionally biased toward low complexity. The segment covering 436 to 446 (AENEGDAKPAE) has biased composition (basic and acidic residues). The RING-type zinc finger occupies 462 to 501 (CVICLDAPVEGACIPCGHMAGCMSCLKDIESKKWGCPICR).

It carries out the reaction S-ubiquitinyl-[E2 ubiquitin-conjugating enzyme]-L-cysteine + [acceptor protein]-L-lysine = [E2 ubiquitin-conjugating enzyme]-L-cysteine + N(6)-ubiquitinyl-[acceptor protein]-L-lysine.. It participates in protein modification; protein ubiquitination. The chain is Probable E3 ubiquitin-protein ligase XBOS34 (XBOS34) from Oryza sativa subsp. japonica (Rice).